A 245-amino-acid chain; its full sequence is MDRWAGKVAVVTGASSGIGAAITTDLAKAGMVVVGLARRVERVEALKANLPESAKPRLHAVKCDVSKEEDITQVFKWVEKKFGGVDVLVNNAGILRQTDLLGTDNGQMLREVLDTNVMGLVLCSQKAYQSMKKRSVDGHIVHINSVVGHKVFDFPQSNIYPASKHAVTAITETMRNELRNAGSRIKVTSISPGVVRTEILPESIIEGGHALLESEDISEAVLYVLGTPPRVQVHELTIKPVGEKF.

NAD(+)-binding positions include 11–40 and Asp64; that span reads VTGASSGIGAAITTDLAKAGMVVVGLARRV. Position 145 (Ser145) interacts with substrate. Tyr160 (proton acceptor) is an active-site residue. Lys164 contributes to the NAD(+) binding site.

This sequence belongs to the short-chain dehydrogenases/reductases (SDR) family. As to quaternary structure, homodimer. Highly expressed level in the midgut and brain in adult females, and at lower level in the abdominal and thoracic ganglia. High levels are detected in corpora allata (CA), Malpighian tubules and fat body.

It carries out the reaction (2E,6E)-farnesol + NADP(+) = (2E,6E)-farnesal + NADPH + H(+). In terms of biological role, mediates oxidation of farnesol into farnesal, a precursor of juvenile hormone in the corpora allata (CA), the glands that synthesize juvenile hormone. Able to oxidize C(10) to C(15) isoprenoid and aliphatic alcohols. This chain is Farnesol dehydrogenase, found in Aedes aegypti (Yellowfever mosquito).